We begin with the raw amino-acid sequence, 122 residues long: Urocortin (122 aa).

The first 25 residues, 1-25, serve as a signal peptide directing secretion; that stretch reads MRQRGRATLLVALLLLVQLRPESSQ. The propeptide occupies 26 to 80; that stretch reads WSPAAAAANVVQDPNLRWNPGVRNQGGGVRALLLLLAERFPRRAGSEPAGERQRR. V120 is modified (valine amide).

It belongs to the sauvagine/corticotropin-releasing factor/urotensin I family. Interacts with CRHR1 and CRHR2 (via their N-terminal extracellular domain).

The protein localises to the secreted. In terms of biological role, acts in vitro to stimulate the secretion of adrenocorticotropic hormone (ACTH). Binds with high affinity to CRF receptor types 1, 2-alpha, and 2-beta. Plays a role in the establishment of normal hearing thresholds. Reduces food intake and regulates ghrelin levels in gastric body and plasma. This is Urocortin (Ucn) from Rattus norvegicus (Rat).